A 247-amino-acid chain; its full sequence is LTTVISYFALVAFALVGVSYATPKASINGRIVGGEMTDISLIPYQVSVQTAISSYGFIHHCGGSIISPRWVVTAAHCAQKTNSAYQVYTGSSNKVEGGQAYRVKTIINHPLYDEETTDYDVALLELAEPIVMNYKTAAIELAEVGEEVETDAMAIVSGWGDTKNFGEEPNMLRSAEVPIFDQELCAYLNANHGVVTERMICAGYLAGGRDSCQGDSGGPLAVDGKLVGIVSWGVGCAQSNFPGVYGI.

An N-terminal signal peptide occupies residues 1-21 (LTTVISYFALVAFALVGVSYA). Residues 22–30 (TPKASINGR) constitute a propeptide, activation peptide. A Peptidase S1 domain is found at 31-247 (IVGGEMTDIS…QSNFPGVYGI (217 aa)). A disulfide bond links Cys61 and Cys77. Active-site charge relay system residues include His76 and Asp120. 2 disulfides stabilise this stretch: Cys185/Cys201 and Cys212/Cys236. Ser216 functions as the Charge relay system in the catalytic mechanism.

It belongs to the peptidase S1 family. As to expression, midgut.

Its subcellular location is the secreted. The protein resides in the extracellular space. The catalysed reaction is Preferential cleavage: Arg-|-Xaa, Lys-|-Xaa.. The chain is Trypsin from Simulium vittatum (Striped black fly).